The sequence spans 427 residues: Ectonucleoside triphosphate diphosphohydrolase 5 (427 aa).

Positions 1–24 (MATSWGAVFMLIIACVGSTVFYRE) are cleaved as a signal peptide. Glu171 serves as the catalytic Proton acceptor. N-linked (GlcNAc...) asparagine glycosylation occurs at Asn231. Cystine bridges form between Cys271/Cys302 and Cys362/Cys376.

Belongs to the GDA1/CD39 NTPase family. Monomer; active form. Homodimer; disulfide-linked. Homodimers are enzymatically inactive. It depends on Ca(2+) as a cofactor. Mg(2+) serves as cofactor. In terms of processing, N-glycosylated; high-mannose type. Ubiquitous.

It is found in the endoplasmic reticulum. Its subcellular location is the secreted. The catalysed reaction is a ribonucleoside 5'-diphosphate + H2O = a ribonucleoside 5'-phosphate + phosphate + H(+). It catalyses the reaction GDP + H2O = GMP + phosphate + H(+). The enzyme catalyses UDP + H2O = UMP + phosphate + H(+). It carries out the reaction IDP + H2O = IMP + phosphate + H(+). The catalysed reaction is CDP + H2O = CMP + phosphate + H(+). It catalyses the reaction ADP + H2O = AMP + phosphate + H(+). The protein operates within protein modification; protein glycosylation. Functionally, hydrolyzes nucleoside diphosphates with a preference for GDP, IDP and UDP compared to ADP and CDP. In the lumen of the endoplasmic reticulum, hydrolyzes UDP that acts as an end-product feedback inhibitor of the UDP-Glc:glycoprotein glucosyltransferases. UMP can be transported back by an UDP-sugar antiporter to the cytosol where it is consumed to regenerate UDP-glucose. Therefore, it positively regulates protein reglucosylation by clearing UDP from the ER lumen and by promoting the regeneration of UDP-glucose. Protein reglucosylation is essential to proper glycoprotein folding and quality control in the ER. This Mus musculus (Mouse) protein is Ectonucleoside triphosphate diphosphohydrolase 5 (Entpd5).